Here is a 506-residue protein sequence, read N- to C-terminus: CDK5 regulatory subunit-associated protein 3 (506 aa).

Short sequence motifs (shuffled ATG8-binding motif) lie at residues 267 to 270, 292 to 295, and 310 to 313; these read IDWG. Residues 269-506 are required for interaction with UFL1 and mediates interaction with CHEK1; sequence WGDFGVEAVS…RPVNLMGTSL (238 aa). Positions 355–370 are RPL10a-binding domain (RBD); the sequence is DELMELEIFLARRAVE. A Glycyl lysine isopeptide (Lys-Gly) (interchain with G-Cter in SUMO2) cross-link involves residue Lys450.

The protein belongs to the CDK5RAP3 family. As to quaternary structure, substrate adapter component of the UFM1 ribosome E3 ligase (UREL) complex, composed of UFL1, DDRGK1 and CDK5RAP3. Interaction with UFL1 anchors CDK5RAP3 in the cytoplasm, preventing its translocation to the nucleus which allows expression of the CCND1 cyclin and progression of cells through the G1/S transition. Interacts with ATG8 family proteins MAP1LC3A, MAP1LC3B, GABARAP, GABARAPL1 and GABARAPL2. Interacts with CDK5R1; competes with CDK5RAP1 and CDK5RAP2. Interacts with RELA. Interacts with CHEK1; may negatively regulate CHEK1 and thereby stimulate entry into mitosis. Interacts with CDKN2A/ARF and MDM2; forms a ternary complex involved in regulation of p53/TP53. Interacts with MAPK14. Interacts with CCNB1. Interacts with TUBG1; may regulate CDK5RAP3 in mitotic G2/M transition checkpoint. Post-translationally, may be phosphorylated by CDK5. In terms of processing, ubiquitinated. Probably triggers proteasomal degradation and is negatively regulated by UFL1. May be ufmylated. Post-translationally, cleaved by caspases early during apoptosis, the resulting peptides may play a role in rupture of the nuclear envelope.

Its subcellular location is the endoplasmic reticulum membrane. It is found in the cytoplasm. The protein localises to the nucleus. The protein resides in the cytoskeleton. It localises to the microtubule organizing center. Its subcellular location is the centrosome. Its function is as follows. Substrate adapter of E3 ligase complexes mediating ufmylation, the covalent attachment of the ubiquitin-like modifier UFM1 to substrate proteins, and which is involved in various processes, such as ribosome recycling and reticulophagy (also called ER-phagy). As part of the UREL complex, plays a key role in ribosome recycling by promoting mono-ufmylation of RPL26/uL24 subunit of the 60S ribosome. Ufmylation of RPL26/uL24 occurs on free 60S ribosomes following ribosome dissociation: it weakens the junction between post-termination 60S subunits and SEC61 translocons, promoting release and recycling of the large ribosomal subunit from the endoplasmic reticulum membrane. Ufmylation of RPL26/uL24 and subsequent 60S ribosome recycling either take place after normal termination of translation or after ribosome stalling during cotranslational translocation at the endoplasmic reticulum. Within the UREL complex, CDK5RAP3 acts as a substrate adapter that constrains UFL1 ligase activity to mono-ufmylate RPL26/uL24 at 'Lys-134'. The UREL complex is also involved in reticulophagy in response to endoplasmic reticulum stress by promoting ufmylation of proteins such as CYB5R3, thereby promoting lysosomal degradation of ufmylated proteins. Also acts as a regulator of transcription: negatively regulates NF-kappa-B-mediated gene transcription through the control of RELA phosphorylation. Also regulates mitotic G2/M transition checkpoint and mitotic G2 DNA damage checkpoint. Through its interaction with CDKN2A/ARF and MDM2 may induce MDM2-dependent p53/TP53 ubiquitination, stabilization and activation in the nucleus, thereby promoting G1 cell cycle arrest and inhibition of cell proliferation. May also play a role in the rupture of the nuclear envelope during apoptosis. May regulate MAPK14 activity by regulating its dephosphorylation by PPM1D/WIP1. Required for liver development. The sequence is that of CDK5 regulatory subunit-associated protein 3 from Pongo abelii (Sumatran orangutan).